Consider the following 345-residue polypeptide: MSIDLISMILLWFGLYYIVSLSLNMEFGYAGIPNFGKALSVLVGAIAVGGILDRLLMLYFGIGGDFITGTTYATSAINNLIASNPIVGIGILILAIILASILGFVVGAIFILPSAKLKEDYLGITLLAISEAVLLICTYNLNIIGGYYGISTPDILAFVSGEYRGWVFAWIVLFIAFLVYLFFERLLNTPFGRVLRAMRENENTVKAFGRDIMKLRIKTMAIGSAIGAIAGVLYSLYTVNIIANAFTRVDWTFFPFLMVLLGGKGNNKGVALGVLCYVIVKVLLDIYKYNIKYALGIPFEPVWLSYMLFGVLMLLILYYKPSGLIPEKPIITPPMKKKIMEISGK.

The next 8 helical transmembrane spans lie at 3–23 (IDLI…SLSL), 42–62 (LVGA…YFGI), 91–111 (ILIL…AIFI), 124–144 (ITLL…LNII), 163–183 (YRGW…YLFF), 222–242 (IGSA…VNII), 269–289 (GVAL…IYKY), and 297–317 (IPFE…LLIL).

It belongs to the binding-protein-dependent transport system permease family. LivHM subfamily.

Its subcellular location is the cell membrane. Its function is as follows. Part of the binding-protein-dependent transport system for branched-chain amino acids. Probably responsible for the translocation of the substrates across the membrane. This is Probable branched-chain amino acid transport permease protein LivM (livM) from Methanocaldococcus jannaschii (strain ATCC 43067 / DSM 2661 / JAL-1 / JCM 10045 / NBRC 100440) (Methanococcus jannaschii).